Reading from the N-terminus, the 381-residue chain is Methanesulfonate monooxygenase (381 aa).

Belongs to the SsuD family.

The enzyme catalyses an alkanesulfonate + FMNH2 + O2 = an aldehyde + FMN + sulfite + H2O + 2 H(+). Functionally, catalyzes the desulfonation of aliphatic sulfonates. Shows highest activity with methanesulfonate. The protein is Methanesulfonate monooxygenase (msuD) of Pseudomonas aeruginosa (strain ATCC 15692 / DSM 22644 / CIP 104116 / JCM 14847 / LMG 12228 / 1C / PRS 101 / PAO1).